The primary structure comprises 590 residues: Synaptotagmin-3 (590 aa).

The Vesicular segment spans residues 1 to 54 (MSGDYEDDLCRRALILVSDLCARVRDADTNDRCQEFNDRIRGYPRGPDADISVS). Positions 10 to 34 (CRRALILVSDLCARVRDADTNDRCQ) are cysteine motif. The helical transmembrane segment at 55 to 75 (LLSVIVTFCGIVLLGVSLFVS) threads the bilayer. Residues 76-590 (WKLCWVPWRD…KGLSEKENSE (515 aa)) lie on the Cytoplasmic side of the membrane. Disordered stretches follow at residues 143–220 (AELL…VTSL), 234–260 (TQQT…LPGG), and 273–295 (ELYQ…GEAG). Low complexity predominate over residues 185-203 (SPELPSEGGAGSGLLLLPP). Residues 234 to 243 (TQQTLTSQPD) are compositionally biased toward polar residues. The span at 278 to 295 (TGPGGRRSGGGPGSGEAG) shows a compositional bias: gly residues. Position 284 is an omega-N-methylarginine (arginine 284). 2 C2 domains span residues 299–420 (PCGR…PLWR) and 431–565 (DLGE…EHWH). Residues aspartate 330, aspartate 336, aspartate 388, phenylalanine 389, aspartate 390, serine 393, aspartate 396, aspartate 462, aspartate 468, aspartate 522, and aspartate 524 each coordinate Ca(2+).

This sequence belongs to the synaptotagmin family. In terms of assembly, homodimer; disulfide-linked via the cysteine motif. Can also form heterodimers with SYT6, SYT9 and SYT10. It depends on Ca(2+) as a cofactor. In terms of tissue distribution, expressed in melanocytes.

The protein localises to the cell membrane. Its subcellular location is the cytoplasmic vesicle. The protein resides in the secretory vesicle membrane. In terms of biological role, ca(2+) sensor involved in Ca(2+)-dependent exocytosis of secretory vesicles through Ca(2+) and phospholipid binding to the C2 domain. Ca(2+) induces binding of the C2-domains to phospholipid membranes and to assembled SNARE-complexes; both actions contribute to triggering exocytosis. Plays a role in dendrite formation by melanocytes. In Homo sapiens (Human), this protein is Synaptotagmin-3 (SYT3).